We begin with the raw amino-acid sequence, 342 residues long: Signal-regulatory protein beta-2 (342 aa).

The N-terminal stretch at 1-32 is a signal peptide; that stretch reads MCSTMSAPTCLAHLPPCFLLLALVLVPSDASG. Ig-like V-type domains lie at 33 to 143 and 157 to 258; these read QSSR…KSDE and PDLW…SGQG. Topologically, residues 33 to 287 are extracellular; the sequence is QSSRNDWQVL…EPATEMSPTG (255 aa). Cysteines 60 and 127 form a disulfide. N-linked (GlcNAc...) asparagine glycosylation is found at N116, N179, and N231. Residues C180 and C242 are joined by a disulfide bond. Residues 288 to 308 form a helical membrane-spanning segment; sequence LLVVFAPVVLGLKAITLAALL. At 309–342 the chain is on the cytoplasmic side; that stretch reads LALATSRRSPGQEDVKTTGPAGAMNTLAWSKGQE. A disordered region spans residues 317–342; it reads SPGQEDVKTTGPAGAMNTLAWSKGQE.

The protein localises to the membrane. The sequence is that of Signal-regulatory protein beta-2 (SIRPB2) from Homo sapiens (Human).